We begin with the raw amino-acid sequence, 196 residues long: Ribosome maturation factor RimP (196 aa).

The interval 164–196 (LAPQKPNKPGPKKPGHEKKKPSNESAAGKPRAE) is disordered. Residues 173–182 (GPKKPGHEKK) are compositionally biased toward basic residues.

It belongs to the RimP family.

It is found in the cytoplasm. Its function is as follows. Required for maturation of 30S ribosomal subunits. The polypeptide is Ribosome maturation factor RimP (Xanthomonas euvesicatoria pv. vesicatoria (strain 85-10) (Xanthomonas campestris pv. vesicatoria)).